The following is a 186-amino-acid chain: Ferritin heavy chain (186 aa).

The 150-residue stretch at 16–165 (QNYHQDSEAA…DHVTNLRKMG (150 aa)) folds into the Ferritin-like diiron domain. Residues glutamate 33, glutamate 68, histidine 71, glutamate 113, and glutamine 147 each coordinate Fe cation. Serine 184 is modified (phosphoserine).

The protein belongs to the ferritin family. Oligomer of 24 subunits. There are two types of subunits: L (light) chain and H (heavy) chain. The major chain can be light or heavy, depending on the species and tissue type. The functional molecule forms a roughly spherical shell with a diameter of 12 nm and contains a central cavity into which the insoluble mineral iron core is deposited. Interacts with NCOA4; NCOA4 promotes targeting of the iron-binding ferritin complex to autolysosomes following starvation or iron depletion.

Its subcellular location is the cytoplasm. The protein localises to the lysosome. It is found in the cytoplasmic vesicle. The protein resides in the autophagosome. It carries out the reaction 4 Fe(2+) + O2 + 4 H(+) = 4 Fe(3+) + 2 H2O. In terms of biological role, stores iron in a soluble, non-toxic, readily available form. Important for iron homeostasis. Has ferroxidase activity. Iron is taken up in the ferrous form and deposited as ferric hydroxides after oxidation. Also plays a role in delivery of iron to cells. Mediates iron uptake in capsule cells of the developing kidney. Delivery to lysosomes is mediated by the cargo receptor NCOA4 for autophagic degradation and release of iron. The polypeptide is Ferritin heavy chain (FTH1) (Cricetulus griseus (Chinese hamster)).